Reading from the N-terminus, the 506-residue chain is GTPase Der (506 aa).

EngA-type G domains lie at 3 to 166 and 218 to 391; these read PVVA…GEQL and IKIA…ACAT. GTP is bound by residues 9–16, 56–60, 118–121, 224–231, 271–275, and 336–339; these read GRPNVGKS, DTGGI, NKTD, DTAGV, and NKWD. The 85-residue stretch at 392–476 folds into the KH-like domain; it reads QKTSTSMLTR…PIRIQFQEGN (85 aa).

This sequence belongs to the TRAFAC class TrmE-Era-EngA-EngB-Septin-like GTPase superfamily. EngA (Der) GTPase family. As to quaternary structure, associates with the 50S ribosomal subunit.

GTPase that plays an essential role in the late steps of ribosome biogenesis. This is GTPase Der from Actinobacillus pleuropneumoniae serotype 3 (strain JL03).